The following is a 282-amino-acid chain: MTAPFTAETGDAHIDDVVGVEVTIDGMLVIADKLGLTDFPPSMGIRLNIPQPDLRKVVWEQVERDLSAQGVLDVYGNPHPEVAAMVDTLARADRTLECRWWRRDAGGKMIRFVVCRKGGRHVVAARDNDLLVLQRVAPQIGLAGMVMTVLGEGSPANVEPLTGVADRLAQCRTAEELTGYGIPPTSARAYASIISEPDGWVEIVANERHPGGTTSQVDVAAGVLDAKQGRIVSIPRRVNGELYGSFLSGTKDNLERALEGLVEFLPSKTWFDKTDADNAYQH.

The protein belongs to the EspG family. Interacts specifically with ESX-1-dependent PE/PPE proteins.

The protein resides in the cytoplasm. Part of the ESX-1 / type VII specialized secretion system (T7SS), which exports several proteins including EsxA and EsxB. Specific chaperone for cognate PE/PPE proteins, plays an important role in preventing aggregation of PE/PPE dimers. Also plays a role in DNA conjugation, in at least recipient strain. The polypeptide is ESX-1 secretion-associated protein EspG1 (Mycolicibacterium smegmatis (strain ATCC 700084 / mc(2)155) (Mycobacterium smegmatis)).